The sequence spans 174 residues: Putative NADH dehydrogenase/NAD(P)H nitroreductase AF_2267 (174 aa).

107-112 contributes to the NAD(+) binding site; it reads AARCLG.

This sequence belongs to the nitroreductase family. FMN serves as cofactor.

The polypeptide is Putative NADH dehydrogenase/NAD(P)H nitroreductase AF_2267 (Archaeoglobus fulgidus (strain ATCC 49558 / DSM 4304 / JCM 9628 / NBRC 100126 / VC-16)).